Here is a 200-residue protein sequence, read N- to C-terminus: Urease accessory protein UreG (200 aa).

Position 11-18 (11-18 (GPVGSGKT)) interacts with GTP.

This sequence belongs to the SIMIBI class G3E GTPase family. UreG subfamily. As to quaternary structure, homodimer. UreD, UreF and UreG form a complex that acts as a GTP-hydrolysis-dependent molecular chaperone, activating the urease apoprotein by helping to assemble the nickel containing metallocenter of UreC. The UreE protein probably delivers the nickel.

The protein resides in the cytoplasm. Functionally, facilitates the functional incorporation of the urease nickel metallocenter. This process requires GTP hydrolysis, probably effectuated by UreG. The protein is Urease accessory protein UreG of Thermosynechococcus vestitus (strain NIES-2133 / IAM M-273 / BP-1).